A 312-amino-acid polypeptide reads, in one-letter code: Src-like-adapter (312 aa).

Residues Met-1–Ser-33 form a disordered region. Residues Leu-38–His-98 enclose the SH3 domain. The SH2 domain occupies Trp-100 to Cys-191. The tract at residues Cys-206–Thr-312 is SLA C-terminal. Position 274 is a phosphoserine (Ser-274).

Homodimer. Interacts with phosphorylated CBL, SYK and LAT. Homodimerization and interaction with phosphorylated CBL occurs via its C-terminal domain. Interacts with PDGFRB and EPHA2. Interacts with phosphorylated proteins ZAP70; CD3Z; VAV1 and LCP2 via its SH2 domain. Post-translationally, phosphorylated.

Its subcellular location is the cytoplasm. It is found in the endosome. In terms of biological role, adapter protein, which negatively regulates T-cell receptor (TCR) signaling. Inhibits T-cell antigen-receptor induced activation of nuclear factor of activated T-cells. Involved in the negative regulation of positive selection and mitosis of T-cells. May act by linking signaling proteins such as ZAP70 with CBL, leading to a CBL dependent degradation of signaling proteins. The polypeptide is Src-like-adapter (Sla) (Rattus norvegicus (Rat)).